A 443-amino-acid polypeptide reads, in one-letter code: D-lactate dehydrogenase (443 aa).

Residues 1–182 lie on the Extracellular side of the membrane; sequence MSWIDELSKI…GGKTIKNSSG (182 aa). One can recognise an FAD-binding PCMH-type domain in the interval 32-209; it reads RAAENFVVVK…TKATIRLFPQ (178 aa). Residues 183–203 form a helical membrane-spanning segment; it reads YSLLHLLVGSEGTLAVITKAT. Topologically, residues 204-383 are cytoplasmic; it reads IRLFPQMRDM…WEKSYFEFRK (180 aa). Residues 384 to 404 traverse the membrane as a helical segment; sequence SLLSLAVSLGGVISGEHGIGA. The Extracellular segment spans residues 405–443; that stretch reads VKLSELEELFPEQFELMRQIKLLFDPKNILNPGKVVRKL.

Belongs to the FAD-binding oxidoreductase/transferase type 4 family. FAD serves as cofactor. The cofactor is Zn(2+).

Its subcellular location is the cell membrane. The catalysed reaction is (R)-lactate + A = pyruvate + AH2. In terms of biological role, catalyzes the dehydrogenation of (R)-lactate (D-lactate) to pyruvate. Is likely involved in the utilization of D-lactate as a sole source for both carbon and electrons for dissimilatory sulfate reduction. Cannot use L-lactate as substrate, and NAD(+), horse cytochrome c, methylene blue or dimethylnaphthoquinone as acceptors. Active in vitro with artificial electron acceptors such as 2,6-dichlorophenolindophenol (DCPIP); the physiological acceptor is not known, but potential acceptors include cytochromes or quinones. The chain is D-lactate dehydrogenase from Archaeoglobus fulgidus (strain ATCC 49558 / DSM 4304 / JCM 9628 / NBRC 100126 / VC-16).